Reading from the N-terminus, the 273-residue chain is Shikimate dehydrogenase (NADP(+)) (273 aa).

Residues 15–17 and Thr62 contribute to the shikimate site; that span reads SKS. Residue Lys66 is the Proton acceptor of the active site. Residue Asp78 coordinates NADP(+). Asn87 and Asp103 together coordinate shikimate. NADP(+) contacts are provided by residues 127–131, 150–155, and Met214; these read GAGGA and NRTYAR. Residue Tyr216 participates in shikimate binding. NADP(+) is bound at residue Gly238.

This sequence belongs to the shikimate dehydrogenase family. As to quaternary structure, homodimer.

The catalysed reaction is shikimate + NADP(+) = 3-dehydroshikimate + NADPH + H(+). It participates in metabolic intermediate biosynthesis; chorismate biosynthesis; chorismate from D-erythrose 4-phosphate and phosphoenolpyruvate: step 4/7. Functionally, involved in the biosynthesis of the chorismate, which leads to the biosynthesis of aromatic amino acids. Catalyzes the reversible NADPH linked reduction of 3-dehydroshikimate (DHSA) to yield shikimate (SA). This Yersinia enterocolitica serotype O:8 / biotype 1B (strain NCTC 13174 / 8081) protein is Shikimate dehydrogenase (NADP(+)).